The chain runs to 639 residues: Extracellular metalloproteinase 1 (639 aa).

An N-terminal signal peptide occupies residues 1-19 (MHGLLLAAGLISLPLHVLA). Residues 20–250 (HPQPSSTSLA…VHNVVDYVAH (231 aa)) constitute a propeptide that is removed on maturation. N-linked (GlcNAc...) asparagine glycosylation occurs at Asn-291. A Zn(2+)-binding site is contributed by His-434. Glu-435 is a catalytic residue. His-438 lines the Zn(2+) pocket. Residue Asn-598 is glycosylated (N-linked (GlcNAc...) asparagine).

It belongs to the peptidase M36 family. The cofactor is Zn(2+).

The protein resides in the secreted. Its function is as follows. Secreted metalloproteinase probably acting as a virulence factor. The polypeptide is Extracellular metalloproteinase 1 (MEP1) (Arthroderma otae (strain ATCC MYA-4605 / CBS 113480) (Microsporum canis)).